The following is a 564-amino-acid chain: MFS-type transporter grgE (564 aa).

Positions 1–10 (MAENQVDPKR) are enriched in basic and acidic residues. The segment at 1-52 (MAENQVDPKRNLPLYGAADESTSATDKEDEVENVRQNGSAPPIEEARESNEA) is disordered. Residue N37 is glycosylated (N-linked (GlcNAc...) asparagine). 7 consecutive transmembrane segments (helical) span residues 60–80 (HGLSLFFIVLAIMLATFIISL), 101–118 (KVSWYGSAYFMTFGGFQT), 131–151 (TTFLVSLFIFEIGSLICGVAP), 161–181 (AIAGLGGAGMATGGFTIIAFS), 192–212 (GLVGSAYGLSAVAGPLIGGAF), 220–240 (WCFYINLPVGGLAAVIILIFF), and 262–282 (LVGVSLLMCLIICFILALQYG). A glycan (N-linked (GlcNAc...) asparagine) is linked at N289. Helical transmembrane passes span 293–313 (VIGLLVGFVAILVALIIWEYY), 329–349 (ALWAPSTYMFFFAGSYFILLY), 368–388 (VRNLPMVVTFSIAAILAGAFV), 392–412 (GIATPVMLVGAAIATIGTGLI), 425–445 (IGYQILAAFGFVIPWLIPMNI), 462–482 (IFLAQTLGGAFSVSAAQSAFV), and 531–551 (TFAISVGMVGFACLMGLFTPW).

The protein belongs to the major facilitator superfamily.

The protein resides in the membrane. Its function is as follows. MFS-type transporter; part of the gene cluster that mediates the biosynthesis of gregatin A, a fungal polyketide featuring an alkylated furanone core. The polypeptide is MFS-type transporter grgE (Penicillium sp).